We begin with the raw amino-acid sequence, 371 residues long: D-erythrose-4-phosphate dehydrogenase (371 aa).

12–13 lines the NAD(+) pocket; sequence RI. Substrate-binding positions include 154–156, arginine 200, 213–214, and arginine 236; these read SCT and TK. Cysteine 155 serves as the catalytic Nucleophile. An NAD(+)-binding site is contributed by asparagine 318.

This sequence belongs to the glyceraldehyde-3-phosphate dehydrogenase family. Epd subfamily. As to quaternary structure, homotetramer.

The protein resides in the cytoplasm. The enzyme catalyses D-erythrose 4-phosphate + NAD(+) + H2O = 4-phospho-D-erythronate + NADH + 2 H(+). Its pathway is cofactor biosynthesis; pyridoxine 5'-phosphate biosynthesis; pyridoxine 5'-phosphate from D-erythrose 4-phosphate: step 1/5. Its function is as follows. Catalyzes the NAD-dependent conversion of D-erythrose 4-phosphate to 4-phosphoerythronate. The polypeptide is D-erythrose-4-phosphate dehydrogenase (Psychromonas ingrahamii (strain DSM 17664 / CCUG 51855 / 37)).